A 467-amino-acid polypeptide reads, in one-letter code: Glutamine synthetase (467 aa).

The region spanning 14–98 is the GS beta-grasp domain; sequence EEVEYVDIRF…VHCNVVEPDT (85 aa). A GS catalytic domain is found at 106 to 467; the sequence is PRGAAVKAEA…PVEYQMYYSC (362 aa). The Mg(2+) site is built by glutamate 131 and glutamate 133. Position 209 (aspartate 209) interacts with ATP. Positions 214 and 221 each coordinate Mg(2+). L-glutamate is bound by residues 265 to 266 and glycine 266; that span reads NG. Residue histidine 270 participates in Mg(2+) binding. ATP contacts are provided by residues 272 to 274 and serine 274; that span reads NMS. L-glutamate is bound by residues arginine 320, glutamate 326, and arginine 338. 2 residues coordinate ATP: arginine 338 and arginine 343. Residue glutamate 356 coordinates Mg(2+). Arginine 358 serves as a coordination point for L-glutamate. Position 396 is an O-AMP-tyrosine (tyrosine 396).

Belongs to the glutamine synthetase family. Oligomer of 12 subunits arranged in the form of two hexameric ring. The cofactor is Mg(2+).

The protein resides in the cytoplasm. It catalyses the reaction L-glutamate + NH4(+) + ATP = L-glutamine + ADP + phosphate + H(+). With respect to regulation, the activity of this enzyme could be controlled by adenylation under conditions of abundant glutamine. In terms of biological role, catalyzes the ATP-dependent biosynthesis of glutamine from glutamate and ammonia. This chain is Glutamine synthetase, found in Cereibacter sphaeroides (Rhodobacter sphaeroides).